Here is a 96-residue protein sequence, read N- to C-terminus: uncharacterized protein (96 aa).

This is an uncharacterized protein from Homo sapiens (Human).